An 82-amino-acid chain; its full sequence is Translational regulator CsrA (82 aa).

The protein belongs to the CsrA/RsmA family. As to quaternary structure, homodimer; the beta-strands of each monomer intercalate to form a hydrophobic core, while the alpha-helices form wings that extend away from the core.

The protein resides in the cytoplasm. Functionally, a translational regulator that binds mRNA to regulate translation initiation and/or mRNA stability. Usually binds in the 5'-UTR at or near the Shine-Dalgarno sequence preventing ribosome-binding, thus repressing translation. Its main target seems to be the major flagellin gene, while its function is anatagonized by FliW. This is Translational regulator CsrA from Brachyspira hyodysenteriae (strain ATCC 49526 / WA1).